Consider the following 367-residue polypeptide: Putative F-box protein At3g21120 (367 aa).

The F-box domain occupies 1 to 43 (MHLPEDLVLEILSKVPAVSLARFRSTCRRWNALVVDGSFAKKH).

In Arabidopsis thaliana (Mouse-ear cress), this protein is Putative F-box protein At3g21120.